Reading from the N-terminus, the 720-residue chain is Denticleless protein homolog (720 aa).

WD repeat units follow at residues 43–85, 92–131, and 134–174; these read GMPV…TTKL, AHSN…LLGI, and GHQC…KDGF. The DDB1-binding motif signature appears at 164–167; that stretch reads WDTR. A Nuclear localization signal motif is present at residues 193 to 200; it reads PSKLRKKR. 4 WD repeats span residues 211–250, 266–305, 310–351, and 355–395; these read DFQQ…AAYR, TRKL…TFPV, GHQN…LPPR, and GHSQ…EEEK. The DDB1-binding motif motif lies at 240-243; it reads WDLR. Disordered regions lie at residues 411–437, 476–495, 528–552, and 607–698; these read KPEE…VGSP, PAKL…PSSK, QSLL…KRRL, and NEHE…TSPK. A compositionally biased stretch (polar residues) spans 528–542; that stretch reads QSLLETSSTPKAQHS. 2 stretches are compositionally biased toward basic and acidic residues: residues 543 to 552 and 642 to 660; these read QAEKRAKRRL and CERD…ERKN.

It belongs to the WD repeat cdt2 family. Component of the DCX(DTL) E3 ubiquitin ligase complex, at least composed of CUL4 (CUL4A or CUL4B), DDB1, DTL/CDT2 and RBX1.

It localises to the nucleus. The protein resides in the cytoplasm. The protein localises to the cytoskeleton. It is found in the microtubule organizing center. Its subcellular location is the centrosome. It localises to the chromosome. It participates in protein modification; protein ubiquitination. Its function is as follows. Substrate-specific adapter of a DCX (DDB1-CUL4-X-box) E3 ubiquitin-protein ligase complex required for cell cycle control, DNA damage response and translesion DNA synthesis. The DCX(DTL) complex, also named CRL4(CDT2) complex, mediates the polyubiquitination and subsequent degradation of CDT1, CDKN1A/p21(CIP1), KMT5A and SDE2. CDT1 degradation in response to DNA damage is necessary to ensure proper cell cycle regulation of DNA replication. CDKN1A/p21(CIP1) degradation during S phase or following UV irradiation is essential to control replication licensing. KMT5A degradation is also important for a proper regulation of mechanisms such as TGF-beta signaling, cell cycle progression, DNA repair and cell migration. Most substrates require their interaction with PCNA for their polyubiquitination: substrates interact with PCNA via their PIP-box, and those containing the 'K+4' motif in the PIP box, recruit the DCX(DTL) complex, leading to their degradation. In undamaged proliferating cells, the DCX(DTL) complex also promotes the 'Lys-164' monoubiquitination of PCNA, thereby being involved in PCNA-dependent translesion DNA synthesis. May play a role in the regulation of the circadian clock. This is Denticleless protein homolog (DTL) from Gallus gallus (Chicken).